Here is a 141-residue protein sequence, read N- to C-terminus: Large ribosomal subunit protein uL11 (141 aa).

It belongs to the universal ribosomal protein uL11 family. As to quaternary structure, part of the ribosomal stalk of the 50S ribosomal subunit. Interacts with L10 and the large rRNA to form the base of the stalk. L10 forms an elongated spine to which L12 dimers bind in a sequential fashion forming a multimeric L10(L12)X complex. In terms of processing, one or more lysine residues are methylated.

In terms of biological role, forms part of the ribosomal stalk which helps the ribosome interact with GTP-bound translation factors. This chain is Large ribosomal subunit protein uL11, found in Thermosipho africanus (strain TCF52B).